The primary structure comprises 108 residues: Large ribosomal subunit protein uL24 (108 aa).

It belongs to the universal ribosomal protein uL24 family. As to quaternary structure, part of the 50S ribosomal subunit.

Its function is as follows. One of two assembly initiator proteins, it binds directly to the 5'-end of the 23S rRNA, where it nucleates assembly of the 50S subunit. Functionally, one of the proteins that surrounds the polypeptide exit tunnel on the outside of the subunit. This is Large ribosomal subunit protein uL24 from Mycoplasmopsis pulmonis (strain UAB CTIP) (Mycoplasma pulmonis).